The sequence spans 163 residues: Aspartate carbamoyltransferase regulatory chain (163 aa).

Positions 113, 118, 143, and 146 each coordinate Zn(2+).

This sequence belongs to the PyrI family. In terms of assembly, contains catalytic and regulatory chains. Zn(2+) serves as cofactor.

Involved in allosteric regulation of aspartate carbamoyltransferase. This chain is Aspartate carbamoyltransferase regulatory chain, found in Caldivirga maquilingensis (strain ATCC 700844 / DSM 13496 / JCM 10307 / IC-167).